The primary structure comprises 1133 residues: Fas-binding factor 1 (1133 aa).

2 disordered regions span residues 89 to 198 (LGLK…TPIR) and 211 to 544 (IMAT…VPVQ). Residues 102-113 (AAKDPGKGELPN) are compositionally biased toward basic and acidic residues. Positions 125 to 134 (KKSLPSPSSS) are enriched in low complexity. Residue S142 is modified to Phosphoserine. Positions 165-182 (PPVTQSKTASDKSPSTVR) are enriched in polar residues. Basic and acidic residues-rich tracts occupy residues 221–245 (PKAE…DELL) and 259–276 (TGEH…RPQD). Residues 277–286 (SEDMWGDEDF) are compositionally biased toward acidic residues. Residues 295–310 (VVSSEGRQSRRQSVSR) are compositionally biased toward low complexity. A compositionally biased stretch (polar residues) spans 325 to 336 (SKQSPPMASSPI). Basic and acidic residues predominate over residues 415–424 (ASKEEKEDWL). Residues 459 to 469 (SGSQPLTSTQG) show a composition bias toward polar residues. Residues 473 to 482 (AAAGGSSGTT) show a composition bias toward low complexity. 2 coiled-coil regions span residues 577–727 (AELQ…VDAA) and 773–870 (IRQR…EEQK). Residue K960 forms a Glycyl lysine isopeptide (Lys-Gly) (interchain with G-Cter in SUMO2) linkage. Positions 1062 to 1085 (AASSQSALMPPAPTTRWCSQPPTG) are disordered.

As to quaternary structure, may interact with FAS cytoplasmic domain. Interacts with PARD3. Interacts with TRAPPC14. In terms of tissue distribution, present in various epithelial cells (at protein level).

The protein resides in the cytoplasm. It is found in the cytoskeleton. It localises to the microtubule organizing center. The protein localises to the centrosome. Its subcellular location is the centriole. The protein resides in the spindle pole. It is found in the cell junction. Functionally, keratin-binding protein required for epithelial cell polarization. Involved in apical junction complex (AJC) assembly via its interaction with PARD3. Required for ciliogenesis. The chain is Fas-binding factor 1 (FBF1) from Homo sapiens (Human).